The sequence spans 209 residues: Uracil phosphoribosyltransferase (209 aa).

5-phospho-alpha-D-ribose 1-diphosphate-binding positions include Arg-79, Arg-104, and Thr-131–Thr-139. Uracil contacts are provided by residues Ile-194 and Gly-199–Ala-201. Residue Asp-200 participates in 5-phospho-alpha-D-ribose 1-diphosphate binding.

The protein belongs to the UPRTase family. The cofactor is Mg(2+).

It catalyses the reaction UMP + diphosphate = 5-phospho-alpha-D-ribose 1-diphosphate + uracil. Its pathway is pyrimidine metabolism; UMP biosynthesis via salvage pathway; UMP from uracil: step 1/1. Its activity is regulated as follows. Allosterically activated by GTP. Catalyzes the conversion of uracil and 5-phospho-alpha-D-ribose 1-diphosphate (PRPP) to UMP and diphosphate. The chain is Uracil phosphoribosyltransferase from Bradyrhizobium diazoefficiens (strain JCM 10833 / BCRC 13528 / IAM 13628 / NBRC 14792 / USDA 110).